We begin with the raw amino-acid sequence, 240 residues long: MRTLFIGDLHLSADRLDITQAFTRFLDTELDDADALYILGDLFEVWVGDDIALPFALELAEKLKQVSQKLPVYFIHGNRDFMLGKQFARAAGMQILPEVTCLNLYGIETVILHGDSLCTLDKAYQRFRKLRSLSLARWLYGCLSKKTRQGIADKIRSNSKSSNQQKSYTIMDVEPNAVDALFAKTHTKHMIHGHTHRPAIHQLANGCQRIVVGDWYEQGSVLSVSAEGINLQSLPFEHTT.

Mn(2+) contacts are provided by Asp-8, His-10, Asp-41, Asn-78, and His-113. Residue 78-79 participates in substrate binding; sequence NR. Residues Asp-121, Ser-159, Asn-163, Lys-166, and His-194 each coordinate substrate. Positions 194 and 196 each coordinate Mn(2+).

Belongs to the LpxH family. Requires Mn(2+) as cofactor.

It is found in the cell inner membrane. The catalysed reaction is UDP-2-N,3-O-bis[(3R)-3-hydroxytetradecanoyl]-alpha-D-glucosamine + H2O = 2-N,3-O-bis[(3R)-3-hydroxytetradecanoyl]-alpha-D-glucosaminyl 1-phosphate + UMP + 2 H(+). It functions in the pathway glycolipid biosynthesis; lipid IV(A) biosynthesis; lipid IV(A) from (3R)-3-hydroxytetradecanoyl-[acyl-carrier-protein] and UDP-N-acetyl-alpha-D-glucosamine: step 4/6. Hydrolyzes the pyrophosphate bond of UDP-2,3-diacylglucosamine to yield 2,3-diacylglucosamine 1-phosphate (lipid X) and UMP by catalyzing the attack of water at the alpha-P atom. Involved in the biosynthesis of lipid A, a phosphorylated glycolipid that anchors the lipopolysaccharide to the outer membrane of the cell. This chain is UDP-2,3-diacylglucosamine hydrolase, found in Shewanella baltica (strain OS195).